We begin with the raw amino-acid sequence, 168 residues long: ATP synthase subunit b (168 aa).

Residues 9–29 (SIPFGTIAYTLFIFLLLLVML) traverse the membrane as a helical segment.

It belongs to the ATPase B chain family. In terms of assembly, F-type ATPases have 2 components, F(1) - the catalytic core - and F(0) - the membrane proton channel. F(1) has five subunits: alpha(3), beta(3), gamma(1), delta(1), epsilon(1). F(0) has three main subunits: a(1), b(2) and c(10-14). The alpha and beta chains form an alternating ring which encloses part of the gamma chain. F(1) is attached to F(0) by a central stalk formed by the gamma and epsilon chains, while a peripheral stalk is formed by the delta and b chains.

It is found in the cell membrane. In terms of biological role, f(1)F(0) ATP synthase produces ATP from ADP in the presence of a proton or sodium gradient. F-type ATPases consist of two structural domains, F(1) containing the extramembraneous catalytic core and F(0) containing the membrane proton channel, linked together by a central stalk and a peripheral stalk. During catalysis, ATP synthesis in the catalytic domain of F(1) is coupled via a rotary mechanism of the central stalk subunits to proton translocation. Functionally, component of the F(0) channel, it forms part of the peripheral stalk, linking F(1) to F(0). The chain is ATP synthase subunit b from Bacillus mycoides (strain KBAB4) (Bacillus weihenstephanensis).